Consider the following 224-residue polypeptide: Orotate phosphoribosyltransferase (224 aa).

Residue K29 coordinates 5-phospho-alpha-D-ribose 1-diphosphate. Residue 37-38 coordinates orotate; sequence FF. Residues 75–76, R105, K106, K109, H111, and 130–138 contribute to the 5-phospho-alpha-D-ribose 1-diphosphate site; these read YK and DDVITAGTS. Residues T134 and R162 each coordinate orotate.

Belongs to the purine/pyrimidine phosphoribosyltransferase family. PyrE subfamily. Homodimer. It depends on Mg(2+) as a cofactor.

The catalysed reaction is orotidine 5'-phosphate + diphosphate = orotate + 5-phospho-alpha-D-ribose 1-diphosphate. The protein operates within pyrimidine metabolism; UMP biosynthesis via de novo pathway; UMP from orotate: step 1/2. Its function is as follows. Catalyzes the transfer of a ribosyl phosphate group from 5-phosphoribose 1-diphosphate to orotate, leading to the formation of orotidine monophosphate (OMP). The protein is Orotate phosphoribosyltransferase of Bordetella pertussis (strain Tohama I / ATCC BAA-589 / NCTC 13251).